The primary structure comprises 785 residues: MLGRMASAQDLLILALCGLLLELPAGYHATDTRQPRLRLSHKELWDLNRTSVFHSPFGYLGLHIMLLDEYQERLFVGGRDLLYSLSLDRISNNYREIHWPSTPLQAEECIIKGRDADECANYVRVLHRYNRTHLLACGTGAFDPVCTFIRVGHPSEDHLFQLESHKFERGRGRCPFDPTSSFTSILIGGELFTGLYSDYWGRDAAVFRTMNRMAHLRTEPDSEHLLKEPKFVGSYMIPDNEDHDDNKVYLFFTEKALEAETSTHAIYTRVGRVCVNDMGGQRIVVNKWSTFLKTRLVCSVPGRNGIDTHFDELEDVFLLQTRDNKNPVIFGLFSTTSNIFRGYAICVYHMAIVRAAFNGPYAHKEGPEYYWALYEGKVPYPRPGSCASKVNGGLYTTTKDYPDEAVHFARSHPLMYQPIKPVHKRPILVKTDGKYNLKQIAVDRVEAEDGQYDVLFIGTDNGIVLKVITIYNQETESMEEVILEELQVFKVPIPILSMEISSKRQQLYIGTESVIAQVKFHQCDMYGTACADCCLARDPYCAWDGISCSRYYPTGMQAKRRFRRQDVRHGNAAQQCFGQQFIGEVLEKTEERLVYGIEYNSTLLEYTPRTLQAKVNWFVQRAHETKKEEVKTDERIIKMDLGLLFLKLHRLDAGTYFCQTVEHSIVHTVRKITLEIVEEERVDEMFSKDYEEEISHKMPCPMQSNIPQVSKPWYKEFLQLIGYSNFQRVEEYCEKVWCTDKKRKKLKMSPSKWKYANPQEKRQDQEKKARIRPEHYRLPRNIADS.

An N-terminal signal peptide occupies residues 1 to 25; the sequence is MLGRMASAQDLLILALCGLLLELPA. Residues 36–520 form the Sema domain; it reads RLRLSHKELW…TESVIAQVKF (485 aa). A glycan (N-linked (GlcNAc...) asparagine) is linked at Asn-48. Cysteines 109 and 119 form a disulfide. Residue Asn-130 is glycosylated (N-linked (GlcNAc...) asparagine). 4 disulfides stabilise this stretch: Cys-137/Cys-146, Cys-274/Cys-386, Cys-298/Cys-346, and Cys-523/Cys-541. Asn-600 is a glycosylation site (N-linked (GlcNAc...) asparagine). The region spanning 651 to 740 is the Ig-like C2-type domain; the sequence is LDAGTYFCQT…EYCEKVWCTD (90 aa). Cys-658 and Cys-733 form a disulfide bridge. Residues 744-785 are disordered; it reads KKLKMSPSKWKYANPQEKRQDQEKKARIRPEHYRLPRNIADS. Residues 759–777 are compositionally biased toward basic and acidic residues; the sequence is QEKRQDQEKKARIRPEHYR.

It belongs to the semaphorin family. In terms of tissue distribution, collapsin-1, -2, -3, and -5 bind to overlapping but distinct axon tracts.

The protein localises to the secreted. Functionally, plays an important role in signaling via the cell surface receptor PLXND1. Mediates reorganization of the actin cytoskeleton, leading to the retraction of cell projections. Promotes focal adhesion disassembly and inhibits adhesion of endothelial cells to the extracellular matrix. Regulates angiogenesis. Can down-regulate sprouting angiogenesis. Required for normal vascular patterning during embryogenesis. Induces the collapse and paralysis of neuronal growth cones. Plays an important role in ensuring the specificity of synapse formation. This chain is Semaphorin-3E (SEMA3E), found in Gallus gallus (Chicken).